We begin with the raw amino-acid sequence, 181 residues long: Monofunctional chorismate mutase (181 aa).

The signal sequence occupies residues methionine 1–alanine 20. The region spanning aspartate 21 to leucine 102 is the Chorismate mutase domain. Residues arginine 38, lysine 49, aspartate 58, glutamate 62, and glutamine 98 each contribute to the substrate site.

The protein resides in the periplasm. The enzyme catalyses chorismate = prephenate. It participates in metabolic intermediate biosynthesis; prephenate biosynthesis; prephenate from chorismate: step 1/1. In terms of biological role, catalyzes the Claisen rearrangement of chorismate to prephenate. This is Monofunctional chorismate mutase from Salmonella typhimurium.